We begin with the raw amino-acid sequence, 217 residues long: IMPACT family member YvyE (217 aa).

It belongs to the IMPACT family.

The protein is IMPACT family member YvyE (yvyE) of Bacillus subtilis (strain 168).